The chain runs to 168 residues: Transcription antitermination protein NusB (168 aa).

The protein belongs to the NusB family.

Involved in transcription antitermination. Required for transcription of ribosomal RNA (rRNA) genes. Binds specifically to the boxA antiterminator sequence of the ribosomal RNA (rrn) operons. This Deinococcus deserti (strain DSM 17065 / CIP 109153 / LMG 22923 / VCD115) protein is Transcription antitermination protein NusB.